The sequence spans 508 residues: 3-octaprenyl-4-hydroxybenzoate carboxy-lyase (508 aa).

N178 contributes to the Mn(2+) binding site. Residues 181 to 183 (IYR), 195 to 197 (RWL), and 200 to 201 (RG) each bind prenylated FMN. E244 provides a ligand contact to Mn(2+). The Proton donor role is filled by D303.

The protein belongs to the UbiD family. As to quaternary structure, homohexamer. It depends on prenylated FMN as a cofactor. The cofactor is Mn(2+).

Its subcellular location is the cell membrane. The enzyme catalyses a 4-hydroxy-3-(all-trans-polyprenyl)benzoate + H(+) = a 2-(all-trans-polyprenyl)phenol + CO2. It functions in the pathway cofactor biosynthesis; ubiquinone biosynthesis. In terms of biological role, catalyzes the decarboxylation of 3-octaprenyl-4-hydroxy benzoate to 2-octaprenylphenol, an intermediate step in ubiquinone biosynthesis. The protein is 3-octaprenyl-4-hydroxybenzoate carboxy-lyase of Cupriavidus taiwanensis (strain DSM 17343 / BCRC 17206 / CCUG 44338 / CIP 107171 / LMG 19424 / R1) (Ralstonia taiwanensis (strain LMG 19424)).